The primary structure comprises 793 residues: Short transient receptor potential channel 1 (793 aa).

The disordered stretch occupies residues 1 to 30 (MMAALYPSTDLSGVSSSSLPSSPSSSSPNE). Residues 1 to 345 (MMAALYPSTD…FGQMSGYRRK (345 aa)) are Cytoplasmic-facing. Low complexity predominate over residues 15-28 (SSSSLPSSPSSSSP). ANK repeat units lie at residues 46-75 (LNEK…SGDL), 83-109 (LGRN…YGCQ), 111-156 (ADAL…EYST), and 158-180 (MDVA…MLLK). Positions 189, 193, 195, and 198 each coordinate Zn(2+). The segment at residues 346 to 379 (PTCKKIMTVLTVGIFWPVLSLCYLIAPKSQFGRI) is an intramembrane region (discontinuously helical). Topologically, residues 380–386 (IHTPFMK) are cytoplasmic. The chain crosses the membrane as a helical span at residues 387 to 404 (FIIHGASYFTFLLLLNLY). Over 405 to 422 (SLVYNEDKKNTMGPALER) the chain is Extracellular. The helical transmembrane segment at 423–439 (IDYLLILWIIGMIWSDI) threads the bilayer. The Cytoplasmic portion of the chain corresponds to 440 to 455 (KRLWYEGLEDFLEESR). Residues 456 to 475 (NQLSFVMNSLYLATFALKVV) form a helical membrane-spanning segment. Residues 476 to 496 (AHNKFHDFADRKDWDAFHPTL) lie on the Extracellular side of the membrane. The helical transmembrane segment at 497-517 (VAEGLFAFANVLSYLRLFFMY) threads the bilayer. Residues 518 to 536 (TTSSILGPLQISMGQMLQD) lie on the Cytoplasmic side of the membrane. Residues 537-558 (FGKFLGMFLLVLFSFTIGLTQL) form a helical membrane-spanning segment. Residues 559–623 (YDKGYTSKEQ…GEELQSFVGA (65 aa)) are Extracellular-facing. A disulfide bond links C571 and C576. The chain crosses the membrane as a helical span at residues 624 to 644 (VIVGTYNVVVVIVLTKLLVAM). Residues 645-793 (LHKSFQLIAN…SKYAMFYPRN (149 aa)) are Cytoplasmic-facing.

It belongs to the transient receptor (TC 1.A.4) family. STrpC subfamily. TRPC1 sub-subfamily. In terms of assembly, heterotetramer with TRPC4 and/or TRPC5. Forms a heteromeric ion channel with TRPC4, with a 1:3 TRPC1:TRPC4 stoichiometry. Unlike other TRP channel proteins, does not form a homomeric channel. Interacts with TRPC4AP. Interacts with ITPR3. Interacts with MX1 and RNF24. Interacts with FKBP4. Interacts with PLSCR1. Interacts with PKD2L2. Forms a heterotetramer with PKD2 with a 2:2 stoichiometry; has distinct channel properties separate from PKD2 or TRPC1 homomers alone. Post-translationally, activation of PRKCA induces phosphorylation of TRPC1 and subsequent Ca2+ entry into cells.

It is found in the cell membrane. It catalyses the reaction Ca(2+)(in) = Ca(2+)(out). It carries out the reaction Na(+)(in) = Na(+)(out). The catalysed reaction is Li(+)(in) = Li(+)(out). The enzyme catalyses Cs(+)(in) = Cs(+)(out). May be operated by a phosphatidylinositol second messenger system activated by receptor tyrosine kinases or G-protein coupled receptors. Also activated by intracellular calcium store depletion. Forms a receptor-activated non-selective calcium permeant cation channel. Forms a heteromeric ion channel with TRPC4 or TRPC5 that has reduced calcium permeability compared to the homomeric TRPC4 or TRPC5 channel. Also permeable to monovalent ions including sodium, lithium and cesium ions. The protein is Short transient receptor potential channel 1 (Trpc1) of Mus musculus (Mouse).